Consider the following 283-residue polypeptide: S-adenosylmethionine mitochondrial carrier protein homolog (283 aa).

Solcar repeat units follow at residues L11–F84, D93–Q178, and S187–I275. 6 helical membrane-spanning segments follow: residues F14–I34, G55–F75, M99–A119, R152–W172, F190–L210, and F248–F268.

It belongs to the mitochondrial carrier (TC 2.A.29) family.

It is found in the mitochondrion inner membrane. In terms of biological role, mitochondrial solute carriers shuttle metabolites, nucleotides, and cofactors through the mitochondrial inner membrane. May mediate the transport of S-adenosylmethionine (SAM) into the mitochondria. The chain is S-adenosylmethionine mitochondrial carrier protein homolog from Drosophila melanogaster (Fruit fly).